We begin with the raw amino-acid sequence, 100 residues long: NADH-quinone oxidoreductase subunit K (100 aa).

Helical transmembrane passes span 3 to 23 (PTSYYILLSALLFTLGVVGVI), 29 to 49 (LVLFMSVELMLNSANLALVTF), and 60 to 80 (IVVFFVIVVAAAEVAVGLALL).

This sequence belongs to the complex I subunit 4L family. In terms of assembly, NDH-1 is composed of 14 different subunits. Subunits NuoA, H, J, K, L, M, N constitute the membrane sector of the complex.

It is found in the cell membrane. It catalyses the reaction a quinone + NADH + 5 H(+)(in) = a quinol + NAD(+) + 4 H(+)(out). NDH-1 shuttles electrons from NADH, via FMN and iron-sulfur (Fe-S) centers, to quinones in the respiratory chain. The immediate electron acceptor for the enzyme in this species is believed to be ubiquinone. Couples the redox reaction to proton translocation (for every two electrons transferred, four hydrogen ions are translocated across the cytoplasmic membrane), and thus conserves the redox energy in a proton gradient. This Roseiflexus castenholzii (strain DSM 13941 / HLO8) protein is NADH-quinone oxidoreductase subunit K.